The primary structure comprises 360 residues: Histidinol-phosphate aminotransferase (360 aa).

An N6-(pyridoxal phosphate)lysine modification is found at K218.

Belongs to the class-II pyridoxal-phosphate-dependent aminotransferase family. Histidinol-phosphate aminotransferase subfamily. Homodimer. Requires pyridoxal 5'-phosphate as cofactor.

The catalysed reaction is L-histidinol phosphate + 2-oxoglutarate = 3-(imidazol-4-yl)-2-oxopropyl phosphate + L-glutamate. Its pathway is amino-acid biosynthesis; L-histidine biosynthesis; L-histidine from 5-phospho-alpha-D-ribose 1-diphosphate: step 7/9. The chain is Histidinol-phosphate aminotransferase from Pelagibacter ubique (strain HTCC1062).